The sequence spans 703 residues: Probable ATP-dependent RNA helicase DHX35 (703 aa).

The Helicase ATP-binding domain maps to 64–229 (LYLIENYQTV…FNQNETSDPA (166 aa)). 77-84 (GETGCGKS) lines the ATP pocket. Residues 176 to 179 (DEAH) carry the DEAH box motif. Residues 261–438 (TVETVVKIHQ…PVILQLKALG (178 aa)) enclose the Helicase C-terminal domain.

The protein belongs to the DEAD box helicase family. DEAH subfamily. Identified in the spliceosome C complex.

It catalyses the reaction ATP + H2O = ADP + phosphate + H(+). May be involved in pre-mRNA splicing. This chain is Probable ATP-dependent RNA helicase DHX35 (DHX35), found in Homo sapiens (Human).